The following is a 351-amino-acid chain: Pleckstrin (351 aa).

The PH 1 domain occupies 4-101; the sequence is KRIREGYLVK…WVRDTKKAIK (98 aa). Residue K64 is modified to N6-acetyllysine. S113 and S117 each carry phosphoserine. The region spanning 136 to 221 is the DEP domain; sequence IEKGIKELNL…NPDAFYYFPD (86 aa). In terms of domain architecture, PH 2 spans 244-348; sequence VIIKQGCLLK…WIKAIQVASR (105 aa).

Major protein kinase C substrate of platelets. The protein is Pleckstrin (PLEK) of Canis lupus familiaris (Dog).